The chain runs to 603 residues: DNA mismatch repair protein MutL (603 aa).

The segment at 361–383 (KETPTLFSKPTIPEYVPSDEDAP) is disordered.

It belongs to the DNA mismatch repair MutL/HexB family.

Functionally, this protein is involved in the repair of mismatches in DNA. It is required for dam-dependent methyl-directed DNA mismatch repair. May act as a 'molecular matchmaker', a protein that promotes the formation of a stable complex between two or more DNA-binding proteins in an ATP-dependent manner without itself being part of a final effector complex. The polypeptide is DNA mismatch repair protein MutL (Listeria monocytogenes serotype 4b (strain CLIP80459)).